A 382-amino-acid polypeptide reads, in one-letter code: MQPHYDLILVGAGLANGLIALRLQQQQPDMRILLIDAAPQAGGNHTWSFHHDDLTESQHRWIAPLVVHHWPDYQVRFPTRRRKLNSGYFCITSQRFAEVLQRQFGPHLWMDTAVAEVNAESVRLKKGQVIGARAVIDGRGYAANSALSVGFQAFIGQEWRLSHPHGLSSPIIMDATVDQQNGYRFVYSLPLSPTRLLIEDTHYIDNATLDPECARQNICDYAAQQGWQLQTLLREEQGALPITLSGNADAFWQQRPLACSGLRAGLFHPTTGYSLPLAVAVADRLSALDVFTSASIHHAITHFARERWQQQGFFRMLNRMLFLAGPADSRWRVMQRFYGLPEDLIARFYAGKLTLTDRLRILSGKPPVPVLAALQAIMTTHR.

6 to 36 (DLILVGAGLANGLIALRLQQQQPDMRILLID) contributes to the NAD(+) binding site.

This sequence belongs to the lycopene cyclase family. It depends on FAD as a cofactor.

It is found in the cell inner membrane. It carries out the reaction a carotenoid psi-end group = a carotenoid beta-end derivative. The catalysed reaction is all-trans-lycopene = gamma-carotene. It catalyses the reaction gamma-carotene = all-trans-beta-carotene. The enzyme catalyses all-trans-neurosporene = beta-zeacarotene. It carries out the reaction beta-zeacarotene = 7,8-dihydro-beta-carotene. The protein operates within carotenoid biosynthesis; beta-carotene biosynthesis. Its activity is regulated as follows. Activity is increased in the presence of NAD(P)H. NADPH is not involved directly in the cyclization reaction, but must play an indirect role, e.g. as an allosteric activator. Its function is as follows. Catalyzes the double cyclization reaction which converts lycopene to beta-carotene. Also catalyzes the double cyclization reaction which converts neurosporene to 7,8-dihydro-beta-carotene via monocyclic beta-zeacarotene. May also convert zeta-carotene to bicyclic 7,8,7',8'-tetrahydro-beta-carotene. The sequence is that of Lycopene beta-cyclase from Pantoea ananas (Erwinia uredovora).